Consider the following 186-residue polypeptide: Elongation factor P (186 aa).

Belongs to the elongation factor P family.

It localises to the cytoplasm. It participates in protein biosynthesis; polypeptide chain elongation. Functionally, involved in peptide bond synthesis. Stimulates efficient translation and peptide-bond synthesis on native or reconstituted 70S ribosomes in vitro. Probably functions indirectly by altering the affinity of the ribosome for aminoacyl-tRNA, thus increasing their reactivity as acceptors for peptidyl transferase. In Prochlorococcus marinus (strain MIT 9301), this protein is Elongation factor P.